An 83-amino-acid polypeptide reads, in one-letter code: Sulfur carrier protein TusA (83 aa).

The Cysteine persulfide intermediate role is filled by Cys-20.

Belongs to the sulfur carrier protein TusA family.

Its subcellular location is the cytoplasm. In terms of biological role, sulfur carrier protein which probably makes part of a sulfur-relay system. In Pseudoalteromonas atlantica (strain T6c / ATCC BAA-1087), this protein is Sulfur carrier protein TusA.